Reading from the N-terminus, the 306-residue chain is MSQYHIPVMLSEVLAVLAPKGYESYLDCTFGAGGYSNAILNSCYCSVTSLDRDPNVIESVEKIKQDYGERFNFIKTNFADSFRKLKHKKFDGIVMDLGVSSMQLDIADRGFSFLYDGPLDMRMSVQGFSAEEFVNTADEEEIADVIYKYGNESLSRRIAKSIVEYRKTARIDSTRKLAEIVRYSIGFRKGKIDSATKTFQAIRIYINNELEELEQFLANVKNILKKDGRLVVVSFHSLEDRIVKNFFKENSEKQVARSKYAKDEIKIDPNKWLKIITPKVLTPSSQEIRLNVRARSAKLRAAKKII.

Residues 33-35 (GGY), Asp-51, Phe-78, Asp-96, and Gln-103 each bind S-adenosyl-L-methionine.

The protein belongs to the methyltransferase superfamily. RsmH family.

The protein resides in the cytoplasm. The enzyme catalyses cytidine(1402) in 16S rRNA + S-adenosyl-L-methionine = N(4)-methylcytidine(1402) in 16S rRNA + S-adenosyl-L-homocysteine + H(+). Its function is as follows. Specifically methylates the N4 position of cytidine in position 1402 (C1402) of 16S rRNA. This is Ribosomal RNA small subunit methyltransferase H from Rickettsia prowazekii (strain Madrid E).